We begin with the raw amino-acid sequence, 654 residues long: Hepatocyte growth factor activator serine proteases (654 aa).

Positions 1–33 (MGRWAWGPSLCPLPGMALLLLLLLLLVPHGAQP) are cleaved as a signal peptide. The segment at 34–100 (QAGGNLTEPP…SSSPGDPVLT (67 aa)) is disordered. Residues 34–370 (QAGGNLTEPP…RLAACESLAR (337 aa)) constitute a propeptide, removed in mature form. 2 N-linked (GlcNAc...) asparagine glycosylation sites follow: Asn38 and Asn46. Positions 57–81 (PVTSVTPVTPATSAPEAQGPRGRGL) are enriched in low complexity. Residues 101–148 (VDGQPCRFPFRYGGRMLHACTSEGSAHRKWCATTHNYDRDRAWGYCVQ) form the Fibronectin type-II domain. 19 disulfides stabilise this stretch: Cys106-Cys131, Cys120-Cys146, Cys162-Cys173, Cys167-Cys184, Cys186-Cys195, Cys200-Cys228, Cys226-Cys235, Cys243-Cys254, Cys248-Cys265, Cys267-Cys276, Cys284-Cys365, Cys305-Cys347, Cys336-Cys360, Cys393-Cys520, Cys431-Cys447, Cys439-Cys509, Cys534-Cys603, Cys566-Cys582, and Cys593-Cys621. The EGF-like 1 domain maps to 158–196 (ALDSCASSPCLNGGSCSHTQDPGSYHCTCPMAFTGRNCD). A Fibronectin type-I domain is found at 198-238 (EKCFDETRYEHLEAGDRWARVSQGQVEQCECAGGQIRCEGT). Residues 239–277 (RHTACLSSPCLNGGTCHLIVATGTTVCSCPPGHAGRLCN) form the EGF-like 2 domain. The Kringle domain occupies 283 to 365 (RCFVGNGTEY…SWEYCRLAAC (83 aa)). N-linked (GlcNAc...) asparagine glycosylation is present at Asn288. One can recognise a Peptidase S1 domain in the interval 407 to 645 (IIGGSSSLPG…YVDWIKDRIW (239 aa)). Catalysis depends on His446, which acts as the Charge relay system. Residues Asn467 and Asn491 are each glycosylated (N-linked (GlcNAc...) asparagine). The Charge relay system role is filled by Asp496. Asn545 carries N-linked (GlcNAc...) asparagine glycosylation. The Charge relay system role is filled by Ser597.

It belongs to the peptidase S1 family. As to quaternary structure, heterodimer of a short chain and a long chain linked by a disulfide bond. In terms of processing, the active form of HGFAC presents in the serum is derived from the COOH-terminal region of the precursor by the cleavage of bonds between Arg-370 and Ile-371 and Arg-406 and Ile-407. In terms of tissue distribution, liver.

The protein resides in the secreted. Functionally, serine protease that hydrolyzes the inactive zymogen hepatocyte growth factor (HGFsc) to an activated disulfide-linked heterodimer, then initiating hepatocyte growth factor receptor signaling pathway. The sequence is that of Hepatocyte growth factor activator serine proteases (HGFAC) from Canis lupus familiaris (Dog).